The chain runs to 130 residues: uncharacterized protein (130 aa).

A signal peptide spans 1-26 (MKFIYKLLFILSIVLFLFNNIITING). The N-linked (GlcNAc...) asparagine glycan is linked to N88.

The protein localises to the secreted. This is an uncharacterized protein from Dictyostelium discoideum (Social amoeba).